Consider the following 70-residue polypeptide: Large ribosomal subunit protein uL30 (70 aa).

This sequence belongs to the universal ribosomal protein uL30 family. Part of the 50S ribosomal subunit.

This chain is Large ribosomal subunit protein uL30, found in Renibacterium salmoninarum (strain ATCC 33209 / DSM 20767 / JCM 11484 / NBRC 15589 / NCIMB 2235).